A 256-amino-acid polypeptide reads, in one-letter code: Deoxyribose-phosphate aldolase (256 aa).

Aspartate 102 (proton donor/acceptor) is an active-site residue. The Schiff-base intermediate with acetaldehyde role is filled by lysine 165. The active-site Proton donor/acceptor is lysine 197.

It belongs to the DeoC/FbaB aldolase family. DeoC type 2 subfamily.

It is found in the cytoplasm. The catalysed reaction is 2-deoxy-D-ribose 5-phosphate = D-glyceraldehyde 3-phosphate + acetaldehyde. Its pathway is carbohydrate degradation; 2-deoxy-D-ribose 1-phosphate degradation; D-glyceraldehyde 3-phosphate and acetaldehyde from 2-deoxy-alpha-D-ribose 1-phosphate: step 2/2. Catalyzes a reversible aldol reaction between acetaldehyde and D-glyceraldehyde 3-phosphate to generate 2-deoxy-D-ribose 5-phosphate. The sequence is that of Deoxyribose-phosphate aldolase from Shewanella oneidensis (strain ATCC 700550 / JCM 31522 / CIP 106686 / LMG 19005 / NCIMB 14063 / MR-1).